A 488-amino-acid polypeptide reads, in one-letter code: MKFKDLRDFVQQLEQRGELKRIQMPISPVLEMTEICDRTLRNKGPALLFENPTGFDIPVLGNLFGTPERVAFGMGAESVSELREIGKLLAFLKEPEPPKGLKDAWSKLPIFRKIIAMAPKVVKDAVCQEVVIEGEDVDLAMLPVQTCWPGDVGPLITWGLTVTKGPNKDRQNLGIYRQQVIGRNKVIMRWLSHRGGALDFREWCEKHPGKPFPVSVALGADPATILGAVTPVPDSLSEYAFAGLLRGNRTELVKCRGNDLQVPATAEIILEGVIHPGEMADEGPYGDHTGYYNEVDSFPVFTVERITHRIKPIYHSTYTGRPPDEPAILGVALNEVFVPILQKQFPEITDFYLPPEGCSYRMAIVTMKKSYPGHAKRVMLGVWSFLRQFMYTKFVIVTDDDINARDWNDVIWAITTRMDPKRDTVMIDNTPIDYLDFASPVSGLGSKMGLDATHKWPGETTREWGRVIVKDEAVTARVDAIWKELGID.

Asn-172 lines the Mn(2+) pocket. Prenylated FMN-binding positions include 175–177, 189–191, and 194–195; these read IYR, RWL, and RG. Glu-238 is a binding site for Mn(2+). Asp-287 functions as the Proton donor in the catalytic mechanism.

Belongs to the UbiD family. In terms of assembly, homohexamer. Requires prenylated FMN as cofactor. Mn(2+) is required as a cofactor.

It localises to the cell membrane. It catalyses the reaction a 4-hydroxy-3-(all-trans-polyprenyl)benzoate + H(+) = a 2-(all-trans-polyprenyl)phenol + CO2. Its pathway is cofactor biosynthesis; ubiquinone biosynthesis. Catalyzes the decarboxylation of 3-octaprenyl-4-hydroxy benzoate to 2-octaprenylphenol, an intermediate step in ubiquinone biosynthesis. The polypeptide is 3-octaprenyl-4-hydroxybenzoate carboxy-lyase (Pseudomonas fluorescens (strain SBW25)).